We begin with the raw amino-acid sequence, 126 residues long: MDAVTVYHGKISRETGEKLLLATGLDGSYLLRDSESVPGVYCLCVLYQGYIYTYRVSQTETGSWSAETAPGVHKRFFRKVKNLISAFQKPDQGIVTPLQYPVEKSSGRGPQAPTGRRDSDICLNAP.

One can recognise an SH2 domain in the interval 6–104; sequence VYHGKISRET…VTPLQYPVEK (99 aa). An interaction with FYN SH3 domain region spans residues 67–92; the sequence is ETAPGVHKRFFRKVKNLISAFQKPDQ. Lysine 89 carries the post-translational modification N6-acetyllysine. Residues 100-126 form a disordered region; sequence YPVEKSSGRGPQAPTGRRDSDICLNAP.

As to quaternary structure, interacts with CD84, CD244, LY9, SLAMF1 and FYN. Interacts with NTRK1, NTRK2 and NTRK3. As to expression, T-cells.

It is found in the cytoplasm. Functionally, cytoplasmic adapter regulating receptors of the signaling lymphocytic activation molecule (SLAM) family such as SLAMF1, CD244, LY9, CD84, SLAMF6 and SLAMF7. In SLAM signaling seems to cooperate with SH2D1B/EAT-2. Initially it has been proposed that association with SLAMF1 prevents SLAMF1 binding to inhibitory effectors including INPP5D/SHIP1 and PTPN11/SHP-2. However, by simultaneous interactions, recruits FYN which subsequently phosphorylates and activates SLAMF1. Positively regulates CD244/2B4- and CD84-mediated natural killer (NK) cell functions. Can also promote CD48-, SLAMF6 -, LY9-, and SLAMF7-mediated NK cell activation. In the context of NK cell-mediated cytotoxicity enhances conjugate formation with target cells. May also regulate the activity of the neurotrophin receptors NTRK1, NTRK2 and NTRK3. This is SH2 domain-containing protein 1A (Sh2d1a) from Mus musculus (Mouse).